We begin with the raw amino-acid sequence, 565 residues long: Arginine--tRNA ligase (565 aa).

Positions 126–136 (ANPTGPLHIGH) match the 'HIGH' region motif.

Belongs to the class-I aminoacyl-tRNA synthetase family. Monomer.

The protein resides in the cytoplasm. The catalysed reaction is tRNA(Arg) + L-arginine + ATP = L-arginyl-tRNA(Arg) + AMP + diphosphate. This Wolbachia sp. subsp. Brugia malayi (strain TRS) protein is Arginine--tRNA ligase.